Reading from the N-terminus, the 66-residue chain is Large ribosomal subunit protein eL24 (66 aa).

Residues C6, C9, C32, and C36 each coordinate Zn(2+). The C4-type zinc finger occupies 6-36 (CSFCGKTIEPGTGIMYVRKDGAILYFCSNKC).

The protein belongs to the eukaryotic ribosomal protein eL24 family. In terms of assembly, part of the 50S ribosomal subunit. Forms a cluster with proteins L3 and L14. It depends on Zn(2+) as a cofactor.

In terms of biological role, binds to the 23S rRNA. This chain is Large ribosomal subunit protein eL24, found in Thermoplasma volcanium (strain ATCC 51530 / DSM 4299 / JCM 9571 / NBRC 15438 / GSS1).